The chain runs to 89 residues: Small ribosomal subunit protein uS15 (89 aa).

This sequence belongs to the universal ribosomal protein uS15 family. As to quaternary structure, part of the 30S ribosomal subunit. Forms a bridge to the 50S subunit in the 70S ribosome, contacting the 23S rRNA.

In terms of biological role, one of the primary rRNA binding proteins, it binds directly to 16S rRNA where it helps nucleate assembly of the platform of the 30S subunit by binding and bridging several RNA helices of the 16S rRNA. Its function is as follows. Forms an intersubunit bridge (bridge B4) with the 23S rRNA of the 50S subunit in the ribosome. The sequence is that of Small ribosomal subunit protein uS15 from Mycobacterium bovis (strain ATCC BAA-935 / AF2122/97).